The primary structure comprises 116 residues: MSLSIELEFKQDVLLVRLTGELDHHTAEELRSKITEAIEKESISHLILNLQHLTFMDSSGLGVILGRYKQVHNNGGEMVVCAISPAIERLFNMSGLFKIIRFEPNEANALQKLGVA.

Positions 3 to 113 constitute an STAS domain; sequence LSIELEFKQD…PNEANALQKL (111 aa). The residue at position 58 (S58) is a Phosphoserine.

This sequence belongs to the anti-sigma-factor antagonist family. In terms of processing, phosphorylated by SpoIIAB on a serine residue.

Its function is as follows. In the phosphorylated form it could act as an anti-anti-sigma factor that counteracts SpoIIAB and thus releases sigma f from inhibition. This Priestia megaterium (Bacillus megaterium) protein is Anti-sigma F factor antagonist (spoIIAA).